A 107-amino-acid chain; its full sequence is MVKGKTFLKRICPEETLNEETKQEVSVGFDKMRTLLRSRESGMTFSQGPKLASCQSVINASSEKTAWTQLVFRKSKMKTYTKSVHVIFIAMGEGEDESVDMNVGISY.

This is an uncharacterized protein from Saccharomyces cerevisiae (strain ATCC 204508 / S288c) (Baker's yeast).